The chain runs to 190 residues: Prostaglandin-H2 D-isomerase (190 aa).

The N-terminal stretch at 1–22 (MATHHTLWMGLALLGVLGDLQA) is a signal peptide. A glycan (O-linked (GalNAc...) serine) is linked at serine 29. Asparagine 51 carries an N-linked (GlcNAc...) (complex) asparagine glycan. The Nucleophile role is filled by cysteine 65. Asparagine 78 is a glycosylation site (N-linked (GlcNAc...) (complex) asparagine). Cysteine 89 and cysteine 186 are disulfide-bonded.

Belongs to the calycin superfamily. Lipocalin family. In terms of assembly, monomer. N- and O-glycosylated. Both N-glycosylation recognition sites are almost quantitatively occupied by N-glycans of the biantennary complex type, with a considerable proportion of structures bearing a bisecting GlcNAc. N-glycan at Asn-78: dHex1Hex5HexNAc4. Agalacto structure as well as sialylated and nonsialylated oligosaccharides bearing alpha2-3- and/or alpha2-6-linked NeuNAc are present. Abundant in the brain and CNS, where it is expressed in tissues of the blood-brain barrier and secreted into the cerebro-spinal fluid. Abundantly expressed in the heart. In the male reproductive system, it is expressed in the testis, epididymis and prostate, and is secreted into the seminal fluid. Expressed in the eye and secreted into the aqueous humor. Lower levels detected in various tissue fluids such as serum, normal urine, ascitic fluid and tear fluid. Also found in a number of other organs including ovary, fimbriae of the fallopian tubes, kidney, leukocytes.

It localises to the rough endoplasmic reticulum. The protein resides in the nucleus membrane. It is found in the golgi apparatus. Its subcellular location is the cytoplasm. The protein localises to the perinuclear region. It localises to the secreted. The catalysed reaction is prostaglandin H2 = prostaglandin D2. In terms of biological role, catalyzes the conversion of PGH2 to PGD2, a prostaglandin involved in smooth muscle contraction/relaxation and a potent inhibitor of platelet aggregation. Involved in a variety of CNS functions, such as sedation, NREM sleep and PGE2-induced allodynia, and may have an anti-apoptotic role in oligodendrocytes. Binds small non-substrate lipophilic molecules, including biliverdin, bilirubin, retinal, retinoic acid and thyroid hormone, and may act as a scavenger for harmful hydrophobic molecules and as a secretory retinoid and thyroid hormone transporter. Possibly involved in development and maintenance of the blood-brain, blood-retina, blood-aqueous humor and blood-testis barrier. It is likely to play important roles in both maturation and maintenance of the central nervous system and male reproductive system. Involved in PLA2G3-dependent maturation of mast cells. PLA2G3 is secreted by immature mast cells and acts on nearby fibroblasts upstream to PTDGS to synthesize PGD2, which in turn promotes mast cell maturation and degranulation via PTGDR. The sequence is that of Prostaglandin-H2 D-isomerase (PTGDS) from Homo sapiens (Human).